The chain runs to 764 residues: Phosphoribosylformylglycinamidine synthase subunit PurL (764 aa).

The active site involves His57. ATP contacts are provided by Tyr60 and Lys104. Residue Glu106 coordinates Mg(2+). Substrate-binding positions include 107–110 (SHNH) and Arg129. The active-site Proton acceptor is His108. Asp130 is a Mg(2+) binding site. Gln258 lines the substrate pocket. Asp286 serves as a coordination point for Mg(2+). Substrate is bound at residue 330–332 (ESQ). ATP-binding residues include Asn518 and Gly555. Asn556 is a binding site for Mg(2+). Ser558 contacts substrate.

This sequence belongs to the FGAMS family. Monomer. Part of the FGAM synthase complex composed of 1 PurL, 1 PurQ and 2 PurS subunits.

The protein localises to the cytoplasm. It carries out the reaction N(2)-formyl-N(1)-(5-phospho-beta-D-ribosyl)glycinamide + L-glutamine + ATP + H2O = 2-formamido-N(1)-(5-O-phospho-beta-D-ribosyl)acetamidine + L-glutamate + ADP + phosphate + H(+). The protein operates within purine metabolism; IMP biosynthesis via de novo pathway; 5-amino-1-(5-phospho-D-ribosyl)imidazole from N(2)-formyl-N(1)-(5-phospho-D-ribosyl)glycinamide: step 1/2. Functionally, part of the phosphoribosylformylglycinamidine synthase complex involved in the purines biosynthetic pathway. Catalyzes the ATP-dependent conversion of formylglycinamide ribonucleotide (FGAR) and glutamine to yield formylglycinamidine ribonucleotide (FGAM) and glutamate. The FGAM synthase complex is composed of three subunits. PurQ produces an ammonia molecule by converting glutamine to glutamate. PurL transfers the ammonia molecule to FGAR to form FGAM in an ATP-dependent manner. PurS interacts with PurQ and PurL and is thought to assist in the transfer of the ammonia molecule from PurQ to PurL. The sequence is that of Phosphoribosylformylglycinamidine synthase subunit PurL from Nocardia farcinica (strain IFM 10152).